Consider the following 440-residue polypeptide: MQIATSSTSPSIFYTPSISPMEEDMNCQELVVNLYTCQVCALPAHGNHFGAISCRACAAFFRRACTGTKTTYKCKKQNNCDIWENGRYKCKKCRLDRCNEVGMDPGRFQFDRDLISATEKYPNSKNFRRTFGMSRLPETIEHFLGRPHFIIFLERHIYSHSEKNFVDLQHLIAKASKLLELGSEKPLIARNNLEKLALGLNLVRDQPAGSHDVQLVTKLGKDEALTFWETDFLTVAKWLTYFDDFQLLPHNQQILLLKSVWHVWNRLEKLALTATSRRQNVCEQKQLMLTYNSVCNPKTIELDYSWFTKYPKEQLCFFFDEMEDYMLTSALDPLTSLEPTDIELTYMLCQLCFHYAGKRYGGEILEVTEKFQENLADNLHDYYVNELNMPRYCGRLNQMLKINNLIQQDIWEKRAKHELAKVFDIFCIEFSHPEMFEDTG.

The nuclear receptor DNA-binding region spans 34–110 (LYTCQVCALP…VGMDPGRFQF (77 aa)). 2 consecutive NR C4-type zinc fingers follow at residues 37 to 57 (CQVC…CRAC) and 74 to 93 (CKKQ…CKKC). Positions 184–439 (EKPLIARNNL…FSHPEMFEDT (256 aa)) constitute an NR LBD domain.

This sequence belongs to the nuclear hormone receptor family.

It is found in the nucleus. In terms of biological role, orphan nuclear receptor. In Caenorhabditis elegans, this protein is Nuclear hormone receptor family member nhr-130 (nhr-130).